The primary structure comprises 416 residues: Multifunctional CCA protein (416 aa).

ATP is bound by residues G8 and R11. G8 and R11 together coordinate CTP. Mg(2+) is bound by residues D21 and D23. R91, R137, and R140 together coordinate ATP. Residues R91, R137, and R140 each contribute to the CTP site. Residues 228-335 (SFIHTMLVLK…ITLFNRFDVW (108 aa)) enclose the HD domain.

Belongs to the tRNA nucleotidyltransferase/poly(A) polymerase family. Bacterial CCA-adding enzyme type 1 subfamily. As to quaternary structure, monomer. Can also form homodimers and oligomers. Mg(2+) is required as a cofactor. It depends on Ni(2+) as a cofactor.

The catalysed reaction is a tRNA precursor + 2 CTP + ATP = a tRNA with a 3' CCA end + 3 diphosphate. It catalyses the reaction a tRNA with a 3' CCA end + 2 CTP + ATP = a tRNA with a 3' CCACCA end + 3 diphosphate. Its function is as follows. Catalyzes the addition and repair of the essential 3'-terminal CCA sequence in tRNAs without using a nucleic acid template. Adds these three nucleotides in the order of C, C, and A to the tRNA nucleotide-73, using CTP and ATP as substrates and producing inorganic pyrophosphate. tRNA 3'-terminal CCA addition is required both for tRNA processing and repair. Also involved in tRNA surveillance by mediating tandem CCA addition to generate a CCACCA at the 3' terminus of unstable tRNAs. While stable tRNAs receive only 3'-terminal CCA, unstable tRNAs are marked with CCACCA and rapidly degraded. The sequence is that of Multifunctional CCA protein from Haemophilus influenzae (strain PittGG).